The following is a 716-amino-acid chain: Fatty acid oxidation complex subunit alpha (716 aa).

The interval 1–189 is enoyl-CoA hydratase/isomerase; that stretch reads MIYQSPTIQV…KVGAIDAVVA (189 aa). Residue D296 participates in substrate binding. The segment at 311-716 is 3-hydroxyacyl-CoA dehydrogenase; sequence QAVNSAAVLG…AATNGSYYPA (406 aa). NAD(+) contacts are provided by residues M324, D343, 400 to 402, K407, and S429; that span reads VVE. H450 serves as the catalytic For 3-hydroxyacyl-CoA dehydrogenase activity. N453 serves as a coordination point for NAD(+). Substrate contacts are provided by N500 and Y660.

The protein in the N-terminal section; belongs to the enoyl-CoA hydratase/isomerase family. In the C-terminal section; belongs to the 3-hydroxyacyl-CoA dehydrogenase family. As to quaternary structure, heterotetramer of two alpha chains (FadB) and two beta chains (FadA).

It catalyses the reaction a (3S)-3-hydroxyacyl-CoA + NAD(+) = a 3-oxoacyl-CoA + NADH + H(+). The enzyme catalyses a (3S)-3-hydroxyacyl-CoA = a (2E)-enoyl-CoA + H2O. It carries out the reaction a 4-saturated-(3S)-3-hydroxyacyl-CoA = a (3E)-enoyl-CoA + H2O. The catalysed reaction is (3S)-3-hydroxybutanoyl-CoA = (3R)-3-hydroxybutanoyl-CoA. It catalyses the reaction a (3Z)-enoyl-CoA = a 4-saturated (2E)-enoyl-CoA. The enzyme catalyses a (3E)-enoyl-CoA = a 4-saturated (2E)-enoyl-CoA. It functions in the pathway lipid metabolism; fatty acid beta-oxidation. Its function is as follows. Involved in the aerobic and anaerobic degradation of long-chain fatty acids via beta-oxidation cycle. Catalyzes the formation of 3-oxoacyl-CoA from enoyl-CoA via L-3-hydroxyacyl-CoA. It can also use D-3-hydroxyacyl-CoA and cis-3-enoyl-CoA as substrate. In Shewanella loihica (strain ATCC BAA-1088 / PV-4), this protein is Fatty acid oxidation complex subunit alpha.